A 1221-amino-acid polypeptide reads, in one-letter code: Deubiquitinating protein VCPIP1 (1221 aa).

Over residues 1 to 19 (MSQPPPPPPLPPPPPPPEA) the composition is skewed to pro residues. The segment at 1 to 40 (MSQPPPPPPLPPPPPPPEAPQTSSSLAAAATPGGLSKRRD) is disordered. In terms of domain architecture, OTU spans 207 to 360 (LIPVHVDGDG…RNHYIPLVGI (154 aa)). D215 is a catalytic residue. The active-site Nucleophile is the C218. Residue H353 is part of the active site. The residue at position 407 (K407) is an N6-acetyllysine. 2 disordered regions span residues 724-778 (SVMQ…KIRI) and 988-1009 (EATT…GSGG). S746 and S756 each carry phosphoserine. The span at 754–770 (PSSAPATPTKAPYSPTT) shows a compositional bias: low complexity. T762 is subject to Phosphothreonine. Phosphoserine is present on residues S767, S993, S997, and S1076. Disordered stretches follow at residues 1117-1177 (ASMD…TDSR) and 1189-1221 (RSKA…MDHS). Residues 1143–1156 (VSSSVRPGNLQTGL) show a composition bias toward polar residues. The segment covering 1162–1173 (LTGGTENLNTET) has biased composition (low complexity). Phosphoserine occurs at positions 1197 and 1206. The span at 1198–1208 (MEEPEEMDSQD) shows a compositional bias: acidic residues. Residues 1209–1221 (AETTNTTEPMDHS) are compositionally biased toward polar residues.

Binds VCP and the ternary complex containing STX5A, NSFL1C and VCP. Phosphorylated at Ser-1206 by ATM or ATR following induction of covalent DNA-protein cross-links (DPCs). As to expression, widely expressed.

The protein localises to the nucleus. Its subcellular location is the cytoplasm. It is found in the endoplasmic reticulum. It localises to the golgi apparatus. The protein resides in the golgi stack. The catalysed reaction is Thiol-dependent hydrolysis of ester, thioester, amide, peptide and isopeptide bonds formed by the C-terminal Gly of ubiquitin (a 76-residue protein attached to proteins as an intracellular targeting signal).. Functionally, deubiquitinating enzyme involved in DNA repair and reassembly of the Golgi apparatus and the endoplasmic reticulum following mitosis. Necessary for VCP-mediated reassembly of Golgi stacks after mitosis. Plays a role in VCP-mediated formation of transitional endoplasmic reticulum (tER). Mediates dissociation of the ternary complex containing STX5A, NSFL1C and VCP. Also involved in DNA repair following phosphorylation by ATM or ATR: acts by catalyzing deubiquitination of SPRTN, thereby promoting SPRTN recruitment to chromatin and subsequent proteolytic cleavage of covalent DNA-protein cross-links (DPCs). Hydrolyzes 'Lys-11'- and 'Lys-48'-linked polyubiquitin chains. This chain is Deubiquitinating protein VCPIP1, found in Rattus norvegicus (Rat).